Reading from the N-terminus, the 902-residue chain is MADPEVCCFITKILCAHGGRMALDALLQEIALSEPQLCEVLQVAGPDRFVVLETGGEAGITRSVVATTRARVCRRKYCQRPCDNLHLCKLNLLGRCNYSQSERNLCKYSHEVLSEENFKVLKNHELSGLNKEELAVLLLQSDPFFMPEICKSYKGEGRQQICNQQPPCSRLHICDHFTRGNCRFPNCLRSHNLMDRKVLAIMREHGLNPDVVQNIQDICNSKHMQKNPPGPRAPSSHRRNMAYRARSKSRDRFFQGSQEFLASASASAERSCTPSPDQISHRASLEDAPVDDLTRKFTYLGSQDRARPPSGSSKATDLGGTSQAGTSQRFLENGSQEDLLHGNPGSTYLASNSTSAPNWKSLTSWTNDQGARRKTVFSPTLPAARSSLGSLQTPEAVTTRKGTGLLSSDYRIINGKSGTQDIQPGPLFNNNADGVATDITSTRSLNYKSTSSGHREISSPRIQDAGPASRDVQATGRIADDADPRVALVNDSLSDVTSTTSSRVDDHDSEEICLDHLCKGCPLNGSCSKVHFHLPYRWQMLIGKTWTDFEHMETIEKGYCNPGIHLCSVGSYTINFRVMSCDSFPIRRLSTPSSVTKPANSVFTTKWIWYWKNESGTWIQYGEEKDKRKNSNVDSSYLESLYQSCPRGVVPFQAGSRNYELSFQGMIQTNIASKTQKDVIRRPTFVPQWYVQQMKRGPDHQPAKTSSVSLTATFRPQEDFCFLSSKKYKLSEIHHLHPEYVRVSEHFKASMKNFKIEKIKKIENSELLDKFTWKKSQMKEEGKLLFYATSRAYVESICSNNFDSFLHETHENKYGKGIYFAKDAIYSHKNCPYDAKNVVMFVAQVLVGKFTEGNITYTSPPPQFDSCVDTRSNPSVFVIFQKDQVYPQYVIEYTEDKACVIS.

Ala-2 is modified (N-acetylalanine). The interval Ala-2 to Phe-254 is N-terminal domain. Positions Arg-69–Lys-76 match the Nuclear localization signal motif. 4 consecutive C3H1-type zinc fingers follow at residues Cys-73–His-86, Cys-88–His-110, Cys-150–His-172, and Ser-169–Leu-193. Positions Ser-221–Asp-251 are disordered. The binding to EXOSC5 stretch occupies residues Met-224–Phe-254. Residues Ser-235–Ser-247 are compositionally biased toward basic residues. 4 positions are modified to phosphoserine; by GSK3-beta: Ser-257, Ser-263, Ser-267, and Ser-271. The segment covering Ser-265 to Gln-278 has biased composition (polar residues). Disordered regions lie at residues Ser-265–Asp-287 and Tyr-299–Arg-373. Thr-273 is subject to Phosphothreonine. Ser-275 and Ser-284 each carry phosphoserine. The short motif at Leu-285–Asp-292 is the Nuclear export signal element. Residues Ser-302, Ser-327, Ser-335, Ser-355, Ser-378, and Ser-387 each carry the phosphoserine modification. Polar residues-rich tracts occupy residues Ser-310–Gln-336 and Pro-344–Gln-369. Thr-393 bears the Phosphothreonine mark. Phosphoserine occurs at positions 407, 469, 492, and 494. A disordered region spans residues Leu-445 to Asp-481. Thr-554 bears the Phosphothreonine mark. 2 positions are modified to phosphoserine: Tyr-572 and Ser-590. Residues Ser-594 to Arg-681 form the WWE domain. One can recognise a PARP catalytic domain in the interval Pro-716–Ser-902.

It belongs to the ARTD/PARP family. Homodimer or homooligomer. Homooligomerization is essential for its antiviral activity. Interacts with EXOSC5. Interacts (via N-terminal domain) with DDX17 in an RNA-independent manner. Interacts with EXOSC3, EXOSC7, DCP2 and DCP1A. Interacts with PARN in an RNA-independent manner. Interacts with XRN1 in an RNA-dependent manner. Isoform 2 interacts (via zinc-fingers) with RIGI in an RNA-dependent manner. Interacts (via N-terminal domain) with DHX30 (via N-terminus) in an RNA-independent manner. Post-translationally, phosphorylation at Ser-275 is essential for sequential phosphorylation of Ser-271, Ser-267, Ser-263 and Ser-257 by GSK3-beta. Phosphorylation by GSK3-beta enhances its antiviral activity.

The protein resides in the cytoplasm. It localises to the nucleus. Antiviral protein which inhibits the replication of viruses by recruiting the cellular RNA degradation machineries to degrade the viral mRNAs. Binds to a ZAP-responsive element (ZRE) present in the target viral mRNA, recruits cellular poly(A)-specific ribonuclease PARN to remove the poly(A) tail, and the 3'-5' exoribonuclease complex exosome to degrade the RNA body from the 3'-end. It also recruits the decapping complex DCP1-DCP2 through RNA helicase p72 (DDX17) to remove the cap structure of the viral mRNA to initiate its degradation from the 5'-end. Its target viruses belong to families which include retroviridae: human immunodeficiency virus type 1 (HIV-1), moloney and murine leukemia virus (MoMLV) and xenotropic MuLV-related virus (XMRV), filoviridae: ebola virus (EBOV) and marburg virus (MARV), togaviridae: sindbis virus (SINV) and Ross river virus (RRV). Specifically targets the multiply spliced but not unspliced or singly spliced HIV-1 mRNAs for degradation. Isoform 1 is a more potent viral inhibitor than isoform 2. Isoform 2 acts as a positive regulator of RIGI signaling resulting in activation of the downstream effector IRF3 leading to the expression of type I IFNs and IFN stimulated genes (ISGs). This is Zinc finger CCCH-type antiviral protein 1 from Homo sapiens (Human).